The following is a 327-amino-acid chain: Meiotic coiled-coil protein 6 (327 aa).

Residues 66 to 188 adopt a coiled-coil conformation; the sequence is DAFERDSTQR…TETKEMNKIK (123 aa). Basic and acidic residues predominate over residues 175-199; sequence RRMETETKEMNKIKPKNDSESDRFK. The interval 175–234 is disordered; it reads RRMETETKEMNKIKPKNDSESDRFKRNSQSLSQQSPLLDVHSPDNSNHRTMLNINNSSPI. The segment covering 202–212 has biased composition (low complexity); the sequence is SQSLSQQSPLL. Positions 217-232 are enriched in polar residues; the sequence is PDNSNHRTMLNINNSS. The stretch at 243–297 forms a coiled coil; that stretch reads NEVKNRISRLQKTFADLENQHHSFQQICQTLRKRLENDSSTTKQRLSKLEEIIRN.

In terms of assembly, interacts with alp4, kms1 and mbo1.

It is found in the nucleus. Its subcellular location is the cytoplasm. It localises to the cytoskeleton. The protein localises to the microtubule organizing center. The protein resides in the spindle pole body. Functionally, has a role in meiotic nuclear oscillation and recombination. Required to remodel astral microtubules into the 'horsetail' astral array maintaining the 'horsetail' nuclear movement. Promotes homologous paring of chromosomes during this movement. The chain is Meiotic coiled-coil protein 6 (mcp6) from Schizosaccharomyces pombe (strain 972 / ATCC 24843) (Fission yeast).